The following is a 298-amino-acid chain: Heat stress transcription factor C-2a (298 aa).

A disordered region spans residues 105 to 128 (SSGGGGAKRKEEAGGCGGGGEAAA). The segment at 145–181 (LRREQREIEGRVAAMWRRVQETERRPKQMLAFLVKVV) is hydrophobic repeat HR-A/B. The Nuclear localization signal motif lies at 213 to 216 (KRPR).

It belongs to the HSF family. Class C subfamily. As to quaternary structure, homotrimer. Exhibits temperature-dependent phosphorylation.

The protein resides in the nucleus. In terms of biological role, transcriptional regulator that specifically binds DNA of heat shock promoter elements (HSE). The protein is Heat stress transcription factor C-2a (HSFC2A) of Oryza sativa subsp. japonica (Rice).